The chain runs to 317 residues: MTSLSNSLSADAGRASLASAAGGEVSDFFALLKPRVMVLVIFTALVGMVVSDATVNPVIAAISLLMIAVGAGASGCLNMWWDADIDALMTRTAKRPIPDGRIRPDEALAFGIVLSVGSVLILGLASNWLAAGLLAFTIVFYAVIYSMWLKRATAQNIVIGGAAGALPPVVGQAAVTGHVGIESLVLFAIIFIWTPPHFWALALVKSGEYARAGIPMMPNVAGPDSTRRQIVWYSLLLAPLALVPVWLGFGGWLYAVVGVLGGLGMLAGAVQVYRLREGEPERKAAMGLFAFSILYLFLLFSALLAEQGLGLFRAVAA.

9 consecutive transmembrane segments (helical) span residues 36 to 56, 57 to 77, 108 to 128, 129 to 149, 157 to 177, 184 to 204, 230 to 247, 251 to 273, and 284 to 304; these read VMVLVIFTALVGMVVSDATVN, PVIAAISLLMIAVGAGASGCL, LAFGIVLSVGSVLILGLASNW, LAAGLLAFTIVFYAVIYSMWL, IVIGGAAGALPPVVGQAAVTG, LVLFAIIFIWTPPHFWALALV, IVWYSLLLAPLALVPVWL, GWLYAVVGVLGGLGMLAGAVQVY, and AAMGLFAFSILYLFLLFSALL.

The protein belongs to the UbiA prenyltransferase family. Protoheme IX farnesyltransferase subfamily.

It localises to the cell inner membrane. The catalysed reaction is heme b + (2E,6E)-farnesyl diphosphate + H2O = Fe(II)-heme o + diphosphate. The protein operates within porphyrin-containing compound metabolism; heme O biosynthesis; heme O from protoheme: step 1/1. Functionally, converts heme B (protoheme IX) to heme O by substitution of the vinyl group on carbon 2 of heme B porphyrin ring with a hydroxyethyl farnesyl side group. The sequence is that of Protoheme IX farnesyltransferase from Methylorubrum populi (strain ATCC BAA-705 / NCIMB 13946 / BJ001) (Methylobacterium populi).